We begin with the raw amino-acid sequence, 215 residues long: 3-isopropylmalate dehydratase small subunit (215 aa).

Belongs to the LeuD family. LeuD type 1 subfamily. As to quaternary structure, heterodimer of LeuC and LeuD.

The enzyme catalyses (2R,3S)-3-isopropylmalate = (2S)-2-isopropylmalate. Its pathway is amino-acid biosynthesis; L-leucine biosynthesis; L-leucine from 3-methyl-2-oxobutanoate: step 2/4. In terms of biological role, catalyzes the isomerization between 2-isopropylmalate and 3-isopropylmalate, via the formation of 2-isopropylmaleate. This chain is 3-isopropylmalate dehydratase small subunit, found in Xanthomonas campestris pv. campestris (strain 8004).